An 88-amino-acid chain; its full sequence is MATKKSGGSSGNGRDSRGRRLGVKKFGSEKVIPGNIIIRQRGTKYHPGKNVGMGKDHTIFSKISGFVHFRKGVFNKTFVDVLEISSVS.

The segment at 1–24 is disordered; sequence MATKKSGGSSGNGRDSRGRRLGVK.

It belongs to the bacterial ribosomal protein bL27 family.

This Ehrlichia canis (strain Jake) protein is Large ribosomal subunit protein bL27.